Here is a 622-residue protein sequence, read N- to C-terminus: Iron transport multicopper oxidase FET5 (622 aa).

The first 18 residues, 1–18, serve as a signal peptide directing secretion; that stretch reads MLFYSFVWSVLAASVALA. At 19 to 573 the chain is on the extracellular side; it reads KTHKLNYTAS…PKGFTTEGYL (555 aa). A glycan (N-linked (GlcNAc...) asparagine) is linked at Asn24. Plastocyanin-like domains lie at 43-146 and 192-301; these read IGFN…FIIH and NILF…IQMR. His79 and His81 together coordinate Cu cation. N-linked (GlcNAc...) asparagine glycans are attached at residues Asn86 and Asn115. Cu cation contacts are provided by His128 and His130. N-linked (GlcNAc...) asparagine glycans are attached at residues Asn196, Asn200, Asn246, Asn295, and Asn364. Positions 392 to 514 constitute a Plastocyanin-like 3 domain; it reads GDNINAQLLK…QGLASVFIEA (123 aa). Cu cation contacts are provided by His418, His421, and His423. Asn455 carries an N-linked (GlcNAc...) asparagine glycan. Cu cation-binding residues include His496, Cys497, His498, and His502. The chain crosses the membrane as a helical span at residues 574–594; sequence ALIISTIIGVWGLYSIAQYGI. Over 595–622 the chain is Cytoplasmic; that stretch reads GEVIPNDEKVYHTLREILAENEIEVSRG.

This sequence belongs to the multicopper oxidase family. Interacts with FTH1. Requires Cu cation as cofactor.

Its subcellular location is the cell membrane. Functionally, iron transport multicopper oxidase, which is required for Fe(2+) high affinity uptake. May be required to oxidize Fe(2+) and release it from the transporter. Essential component of copper-dependent iron transport. The chain is Iron transport multicopper oxidase FET5 (FET5) from Saccharomyces cerevisiae (strain ATCC 204508 / S288c) (Baker's yeast).